Consider the following 226-residue polypeptide: Biosynthetic peptidoglycan transglycosylase (226 aa).

Residues 7–29 (VMALSAIGLLLLPYLLTPLYRIG) form a helical membrane-spanning segment.

Belongs to the glycosyltransferase 51 family.

The protein resides in the cell inner membrane. The catalysed reaction is [GlcNAc-(1-&gt;4)-Mur2Ac(oyl-L-Ala-gamma-D-Glu-L-Lys-D-Ala-D-Ala)](n)-di-trans,octa-cis-undecaprenyl diphosphate + beta-D-GlcNAc-(1-&gt;4)-Mur2Ac(oyl-L-Ala-gamma-D-Glu-L-Lys-D-Ala-D-Ala)-di-trans,octa-cis-undecaprenyl diphosphate = [GlcNAc-(1-&gt;4)-Mur2Ac(oyl-L-Ala-gamma-D-Glu-L-Lys-D-Ala-D-Ala)](n+1)-di-trans,octa-cis-undecaprenyl diphosphate + di-trans,octa-cis-undecaprenyl diphosphate + H(+). The protein operates within cell wall biogenesis; peptidoglycan biosynthesis. Its function is as follows. Peptidoglycan polymerase that catalyzes glycan chain elongation from lipid-linked precursors. The chain is Biosynthetic peptidoglycan transglycosylase from Nitrobacter winogradskyi (strain ATCC 25391 / DSM 10237 / CIP 104748 / NCIMB 11846 / Nb-255).